Reading from the N-terminus, the 813-residue chain is Tax1-binding protein 1 homolog (813 aa).

Phosphoserine occurs at positions 124, 138, and 225. Residues 144–596 (TTKAGLLELK…SYSLQLAEKD (453 aa)) adopt a coiled-coil conformation. The tract at residues 320-420 (EEIGKLQSCL…ELQLHAVKTD (101 aa)) is oligomerization. Residue S618 is modified to Phosphoserine; by IKKA. Residue S631 is modified to Phosphoserine. The interval 667–732 (AHETRDGADG…NVPIPPDPAN (66 aa)) is disordered. Position 692 is a phosphoserine; by IKKA (S692). 2 consecutive UBZ1-type zinc fingers follow at residues 751–777 (HKKC…VESH) and 778–804 (WKVC…VQTH). Positions 754, 757, 773, 777, 781, 784, 800, and 804 each coordinate Zn(2+).

As to quaternary structure, homooligomer. Interacts with TNFAIP3. Interacts with STARD13. Interacts with MYO6. Interacts with TOM1; the interaction is indirect and is mediated by MYO6, which acts as a bridge between TOM1 and TAX1BP1. Interacts with MAVS; this interaction induces MAVS polyubiquitination. Interacts with TNIP1. Interacts with TRAF6; this interaction mediates deubiquitination of TRAF6 and inhibition of NF-kappa-B activation. Interacts with RIPK1; this interaction negatively regulates RIPK1 ubiquitination. Interacts with NBR1. Interacts with TBK1. Interacts with RB1CC1. Interacts with SQSTM1. Interacts with AZI2. Interacts with TICAM1 and TRIM32; these interactions target TICAM1 to TAX1BP1-mediated selective autophagic degradation. Phosphorylated in the C-terminal region by CHUK/IKKA leading to NF-kappa-B signaling down-regulation.

The protein localises to the cytoplasm. Its subcellular location is the mitochondrion. It localises to the preautophagosomal structure. It is found in the cytoplasmic vesicle. The protein resides in the autophagosome. In terms of biological role, ubiquitin-binding adapter that participates in inflammatory, antiviral and innate immune processes as well as selective autophagy regulation. Plays a key role in the negative regulation of NF-kappa-B and IRF3 signalings by acting as an adapter for the ubiquitin-editing enzyme A20/TNFAIP3 to bind and inactivate its substrates. Disrupts the interactions between the E3 ubiquitin ligase TRAF3 and TBK1/IKBKE to attenuate 'Lys63'-linked polyubiquitination of TBK1 and thereby IFN-beta production. Also recruits A20/TNFAIP3 to ubiquitinated signaling proteins TRAF6 and RIPK1, leading to their deubiquitination and disruption of IL-1 and TNF-induced NF-kappa-B signaling pathways. Inhibits virus-induced apoptosis by inducing the 'Lys-48'-linked polyubiquitination and degradation of MAVS via recruitment of the E3 ligase ITCH, thereby attenuating MAVS-mediated apoptosis signaling. As a macroautophagy/autophagy receptor, facilitates the xenophagic clearance of pathogenic bacteria such as Salmonella typhimurium and Mycobacterium tuberculosis. Upon NBR1 recruitment to the SQSTM1-ubiquitin condensates, acts as the major recruiter of RB1CC1 to these ubiquitin condensates to promote their autophagic degradation. Mediates the autophagic degradation of other substrates including TICAM1. The chain is Tax1-binding protein 1 homolog (Tax1bp1) from Rattus norvegicus (Rat).